Consider the following 64-residue polypeptide: MVFLKKSLLLVLFVGLVSLSICEENKREEHEEIEENKEKAEEKRGWMSKIASGIGTFLSGMQQG.

Positions 1 to 22 are cleaved as a signal peptide; the sequence is MVFLKKSLLLVLFVGLVSLSIC. The propeptide occupies 23–42; sequence EENKREEHEEIEENKEKAEE. Q63 is modified (glutamine amide).

In terms of tissue distribution, expressed by the skin glands.

The protein localises to the secreted. In terms of biological role, antimicrobial peptide against the wall-less bacteria A.laidlawii and S.melliferum, the Gram-positive bacteria B.megaterium KM, C.glutamicum ATCC 27853 and M.luteus ATCC 27853 and the Gram-negative-bacteria R.meliloti 102F34 and E.coli K12. This chain is Phylloxin-B1, found in Phyllomedusa bicolor (Two-colored leaf frog).